We begin with the raw amino-acid sequence, 186 residues long: Elongation factor P (186 aa).

This sequence belongs to the elongation factor P family.

It is found in the cytoplasm. It participates in protein biosynthesis; polypeptide chain elongation. Functionally, involved in peptide bond synthesis. Stimulates efficient translation and peptide-bond synthesis on native or reconstituted 70S ribosomes in vitro. Probably functions indirectly by altering the affinity of the ribosome for aminoacyl-tRNA, thus increasing their reactivity as acceptors for peptidyl transferase. This chain is Elongation factor P, found in Prochlorococcus marinus (strain MIT 9515).